Reading from the N-terminus, the 291-residue chain is MSSNFDKFQKRRLISSYFSVVLSVFLVLFLLGVLGLFIINSKKLADDFKEKIAMTVFFKNEANDSIIKAFNSELKRAPFALSYVYVTKEKAAKEHTDIIGEDFLTFLGENPLLNSYDIHLKADYVERDSILKIESALRKNTMIEDIVYDKQLVNLVNDNIKKVSMWILIISGFLTVIAVLLINSSLRLSIHSNRFIIKTMQMVGATKSFIRKPFVMRSVKLGMLGALLAIIALIGLLFYVETNFPGLGILEDKALIGLVLLAVFGLGVLITWVSTHFATQRFLNLRTDDLY.

The Cytoplasmic portion of the chain corresponds to 1–18 (MSSNFDKFQKRRLISSYF). A helical transmembrane segment spans residues 19-39 (SVVLSVFLVLFLLGVLGLFII). Over 40–162 (NSKKLADDFK…VNLVNDNIKK (123 aa)) the chain is Periplasmic. The helical transmembrane segment at 163–183 (VSMWILIISGFLTVIAVLLIN) threads the bilayer. Residues 184–220 (SSLRLSIHSNRFIIKTMQMVGATKSFIRKPFVMRSVK) are Cytoplasmic-facing. Residues 221–241 (LGMLGALLAIIALIGLLFYVE) form a helical membrane-spanning segment. Over 242 to 253 (TNFPGLGILEDK) the chain is Periplasmic. Residues 254 to 274 (ALIGLVLLAVFGLGVLITWVS) form a helical membrane-spanning segment. Topologically, residues 275–291 (THFATQRFLNLRTDDLY) are cytoplasmic.

It belongs to the ABC-4 integral membrane protein family. FtsX subfamily.

The protein localises to the cell inner membrane. Its function is as follows. Required for cell division and gliding motility. This is Cell division protein FtsX from Flavobacterium johnsoniae (strain ATCC 17061 / DSM 2064 / JCM 8514 / BCRC 14874 / CCUG 350202 / NBRC 14942 / NCIMB 11054 / UW101) (Cytophaga johnsonae).